The sequence spans 630 residues: 1-deoxy-D-xylulose-5-phosphate synthase (630 aa).

Thiamine diphosphate contacts are provided by residues His72 and 113-115 (GHS). Asp144 lines the Mg(2+) pocket. Residues 145 to 146 (GA), Asn173, Tyr284, and Glu367 each bind thiamine diphosphate. Residue Asn173 participates in Mg(2+) binding.

Belongs to the transketolase family. DXPS subfamily. Homodimer. Requires Mg(2+) as cofactor. It depends on thiamine diphosphate as a cofactor.

It carries out the reaction D-glyceraldehyde 3-phosphate + pyruvate + H(+) = 1-deoxy-D-xylulose 5-phosphate + CO2. The protein operates within metabolic intermediate biosynthesis; 1-deoxy-D-xylulose 5-phosphate biosynthesis; 1-deoxy-D-xylulose 5-phosphate from D-glyceraldehyde 3-phosphate and pyruvate: step 1/1. In terms of biological role, catalyzes the acyloin condensation reaction between C atoms 2 and 3 of pyruvate and glyceraldehyde 3-phosphate to yield 1-deoxy-D-xylulose-5-phosphate (DXP). The sequence is that of 1-deoxy-D-xylulose-5-phosphate synthase from Bacillus cereus (strain B4264).